Here is a 136-residue protein sequence, read N- to C-terminus: Large ribosomal subunit protein uL13 (136 aa).

This sequence belongs to the universal ribosomal protein uL13 family. As to quaternary structure, part of the 50S ribosomal subunit.

In terms of biological role, this protein is one of the early assembly proteins of the 50S ribosomal subunit, although it is not seen to bind rRNA by itself. It is important during the early stages of 50S assembly. The protein is Large ribosomal subunit protein uL13 of Thermoplasma volcanium (strain ATCC 51530 / DSM 4299 / JCM 9571 / NBRC 15438 / GSS1).